Reading from the N-terminus, the 325-residue chain is Probable cell division protein WhiA (325 aa).

The H-T-H motif DNA-binding region spans 280-313 (SLKELGNMLEKPLGKSGVNHRLRKIDKIAEELRK).

It belongs to the WhiA family.

Involved in cell division and chromosome segregation. The polypeptide is Probable cell division protein WhiA (Caldicellulosiruptor bescii (strain ATCC BAA-1888 / DSM 6725 / KCTC 15123 / Z-1320) (Anaerocellum thermophilum)).